We begin with the raw amino-acid sequence, 313 residues long: Olfactory receptor 8B3 (313 aa).

The Extracellular segment spans residues 1-25; that stretch reads MLARNNSLVTEFILAGLTDHPEFQQ. N-linked (GlcNAc...) asparagine glycosylation occurs at Asn-5. The helical transmembrane segment at 26–46 threads the bilayer; the sequence is PLFFLFLVVYIVTMVGNLGLI. The Cytoplasmic portion of the chain corresponds to 47–54; sequence ILFGLNSH. The helical transmembrane segment at 55 to 75 threads the bilayer; the sequence is LHTPMYYFLFNLSFIDLCYSS. Residues 76–99 lie on the Extracellular side of the membrane; that stretch reads VFTPKMLMNFVSKKNIISYVGCMT. Cys-97 and Cys-189 are oxidised to a cystine. A helical membrane pass occupies residues 100-120; it reads QLFFFLFFVISECYMLTSMAY. Over 121–139 the chain is Cytoplasmic; the sequence is DRYVAICNPLLYKVTMSHQ. A helical membrane pass occupies residues 140-160; the sequence is VCSMLTFAAYIMGLAGATAHT. Residues 161 to 197 lie on the Extracellular side of the membrane; that stretch reads GCMLRLTFCSANIINHYLCDILPLLQLSCTSTYVNEV. A helical transmembrane segment spans residues 198-217; the sequence is VVLIVVGINIMVPSCTILIS. At 218 to 237 the chain is on the cytoplasmic side; the sequence is YVFIVTSILHIKSTQGRSKA. The chain crosses the membrane as a helical span at residues 238-258; sequence FSTCSSHVIALSLFFGSAAFM. The Extracellular segment spans residues 259 to 270; sequence YIKYSSGSMEQG. Residues 271–291 form a helical membrane-spanning segment; the sequence is KVSSVFYTNVVPMLNPLIYSL. The Cytoplasmic portion of the chain corresponds to 292 to 313; that stretch reads RNKDVKVALRKALIKIQRRNIF.

It belongs to the G-protein coupled receptor 1 family.

The protein localises to the cell membrane. Odorant receptor. The polypeptide is Olfactory receptor 8B3 (OR8B3) (Homo sapiens (Human)).